We begin with the raw amino-acid sequence, 447 residues long: UDP-N-acetylglucosamine 1-carboxyvinyltransferase (447 aa).

27–28 (KN) provides a ligand contact to phosphoenolpyruvate. Residue Arg-97 coordinates UDP-N-acetyl-alpha-D-glucosamine. Residue Cys-121 is the Proton donor of the active site. Cys-121 is subject to 2-(S-cysteinyl)pyruvic acid O-phosphothioketal. Residues 126–130 (RPVDL), Asp-314, and Val-336 contribute to the UDP-N-acetyl-alpha-D-glucosamine site.

Belongs to the EPSP synthase family. MurA subfamily.

The protein localises to the cytoplasm. It catalyses the reaction phosphoenolpyruvate + UDP-N-acetyl-alpha-D-glucosamine = UDP-N-acetyl-3-O-(1-carboxyvinyl)-alpha-D-glucosamine + phosphate. The protein operates within cell wall biogenesis; peptidoglycan biosynthesis. Functionally, cell wall formation. Adds enolpyruvyl to UDP-N-acetylglucosamine. The sequence is that of UDP-N-acetylglucosamine 1-carboxyvinyltransferase from Nostoc sp. (strain PCC 7120 / SAG 25.82 / UTEX 2576).